The following is a 207-amino-acid chain: Large ribosomal subunit protein uL4 (207 aa).

The disordered stretch occupies residues Lys50 to Gln75.

The protein belongs to the universal ribosomal protein uL4 family. Part of the 50S ribosomal subunit.

In terms of biological role, one of the primary rRNA binding proteins, this protein initially binds near the 5'-end of the 23S rRNA. It is important during the early stages of 50S assembly. It makes multiple contacts with different domains of the 23S rRNA in the assembled 50S subunit and ribosome. Functionally, forms part of the polypeptide exit tunnel. The protein is Large ribosomal subunit protein uL4 of Pelobacter propionicus (strain DSM 2379 / NBRC 103807 / OttBd1).